Consider the following 258-residue polypeptide: Indole-3-glycerol phosphate synthase (258 aa).

The protein belongs to the TrpC family.

It carries out the reaction 1-(2-carboxyphenylamino)-1-deoxy-D-ribulose 5-phosphate + H(+) = (1S,2R)-1-C-(indol-3-yl)glycerol 3-phosphate + CO2 + H2O. The protein operates within amino-acid biosynthesis; L-tryptophan biosynthesis; L-tryptophan from chorismate: step 4/5. The polypeptide is Indole-3-glycerol phosphate synthase (Campylobacter jejuni subsp. doylei (strain ATCC BAA-1458 / RM4099 / 269.97)).